Here is a 152-residue protein sequence, read N- to C-terminus: D-aminoacyl-tRNA deacylase (152 aa).

The short motif at 142-143 is the Gly-cisPro motif, important for rejection of L-amino acids element; sequence GP.

Belongs to the DTD family. As to quaternary structure, homodimer.

The protein resides in the cytoplasm. It catalyses the reaction glycyl-tRNA(Ala) + H2O = tRNA(Ala) + glycine + H(+). The enzyme catalyses a D-aminoacyl-tRNA + H2O = a tRNA + a D-alpha-amino acid + H(+). In terms of biological role, an aminoacyl-tRNA editing enzyme that deacylates mischarged D-aminoacyl-tRNAs. Also deacylates mischarged glycyl-tRNA(Ala), protecting cells against glycine mischarging by AlaRS. Acts via tRNA-based rather than protein-based catalysis; rejects L-amino acids rather than detecting D-amino acids in the active site. By recycling D-aminoacyl-tRNA to D-amino acids and free tRNA molecules, this enzyme counteracts the toxicity associated with the formation of D-aminoacyl-tRNA entities in vivo and helps enforce protein L-homochirality. This is D-aminoacyl-tRNA deacylase from Burkholderia cenocepacia (strain ATCC BAA-245 / DSM 16553 / LMG 16656 / NCTC 13227 / J2315 / CF5610) (Burkholderia cepacia (strain J2315)).